The chain runs to 123 residues: Small ribosomal subunit protein uS12 (123 aa).

Asp-89 is subject to 3-methylthioaspartic acid.

The protein belongs to the universal ribosomal protein uS12 family. Part of the 30S ribosomal subunit. Contacts proteins S8 and S17. May interact with IF1 in the 30S initiation complex.

Functionally, with S4 and S5 plays an important role in translational accuracy. Its function is as follows. Interacts with and stabilizes bases of the 16S rRNA that are involved in tRNA selection in the A site and with the mRNA backbone. Located at the interface of the 30S and 50S subunits, it traverses the body of the 30S subunit contacting proteins on the other side and probably holding the rRNA structure together. The combined cluster of proteins S8, S12 and S17 appears to hold together the shoulder and platform of the 30S subunit. This is Small ribosomal subunit protein uS12 from Bifidobacterium animalis subsp. lactis (strain AD011).